The primary structure comprises 527 residues: Putative WEB family protein At4g17210 (527 aa).

Disordered regions lie at residues 1-28 (MAKI…IDTR) and 46-70 (FSKK…TDVS). The segment covering 55–68 (SSSSSSQSQDTTTD) has biased composition (low complexity). Coiled coils occupy residues 95 to 159 (AAKA…YILI), 202 to 389 (SNKI…AKHM), and 436 to 513 (KKIR…EAHS).

It belongs to the WEB family.

The protein is Putative WEB family protein At4g17210 of Arabidopsis thaliana (Mouse-ear cress).